Consider the following 199-residue polypeptide: Nitrile hydratase subunit alpha (199 aa).

Fe(3+)-binding residues include Cys-102, Cys-105, Ser-106, and Cys-107. Position 105 is a cysteine sulfinic acid (-SO2H) (Cys-105). A Cysteine sulfenic acid (-SOH) modification is found at Cys-107.

Belongs to the nitrile hydratase subunit alpha family. As to quaternary structure, heterodimer of an alpha and a beta chain. Fe(3+) is required as a cofactor. Oxidation on Cys-105 is essential for the activity. Post-translationally, oxidation on Cys-107 stabilizes the Fe-NO ligand coordinated in the inactive form.

It catalyses the reaction an aliphatic primary amide = an aliphatic nitrile + H2O. Its activity is regulated as follows. Inactivated by oxidation of Cys-107 to a sulfenic acid. In terms of biological role, NHase catalyzes the hydration of various nitrile compounds to the corresponding amides. Industrial production of acrylamide is now being developed using some of the enzymes of this class. The polypeptide is Nitrile hydratase subunit alpha (nthA) (Rhodococcus sp).